Consider the following 380-residue polypeptide: Cytochrome b (380 aa).

Transmembrane regions (helical) follow at residues 34 to 54, 78 to 99, 114 to 134, and 179 to 199; these read FGSLLAVCLATQILTGLLLAM, WLIRNLHANGASFFFICIFLHI, WNTGVILLLTLMATAFVGYVL, and FFALHFLLPFVIAGITVTHLM. Residues histidine 84 and histidine 98 each contribute to the heme b site. The heme b site is built by histidine 183 and histidine 197. A ubiquinone is bound at residue histidine 202. Transmembrane regions (helical) follow at residues 227–247, 289–309, 321–341, and 348–368; these read LKDILGLALMLTPFLTLALFS, LGGVLALAASVLILLLIPFLH, LSQALFWLLVANLLILTWVGS, and FIIIGQMASFSYFTILLSLLP.

Belongs to the cytochrome b family. As to quaternary structure, the cytochrome bc1 complex contains 11 subunits: 3 respiratory subunits (MT-CYB, CYC1 and UQCRFS1), 2 core proteins (UQCRC1 and UQCRC2) and 6 low-molecular weight proteins (UQCRH/QCR6, UQCRB/QCR7, UQCRQ/QCR8, UQCR10/QCR9, UQCR11/QCR10 and a cleavage product of UQCRFS1). This cytochrome bc1 complex then forms a dimer. The cofactor is heme b.

The protein localises to the mitochondrion inner membrane. Its function is as follows. Component of the ubiquinol-cytochrome c reductase complex (complex III or cytochrome b-c1 complex) that is part of the mitochondrial respiratory chain. The b-c1 complex mediates electron transfer from ubiquinol to cytochrome c. Contributes to the generation of a proton gradient across the mitochondrial membrane that is then used for ATP synthesis. In Crossoptilon crossoptilon (White-eared pheasant), this protein is Cytochrome b (MT-CYB).